We begin with the raw amino-acid sequence, 314 residues long: Ferrochelatase (314 aa).

Positions 184 and 259 each coordinate Fe cation.

It belongs to the ferrochelatase family.

It localises to the cytoplasm. The enzyme catalyses heme b + 2 H(+) = protoporphyrin IX + Fe(2+). Its pathway is porphyrin-containing compound metabolism; protoheme biosynthesis; protoheme from protoporphyrin-IX: step 1/1. Catalyzes the ferrous insertion into protoporphyrin IX. This is Ferrochelatase from Chlamydia trachomatis serovar L2 (strain ATCC VR-902B / DSM 19102 / 434/Bu).